A 337-amino-acid polypeptide reads, in one-letter code: Heat-inducible transcription repressor HrcA (337 aa).

It belongs to the HrcA family.

Functionally, negative regulator of class I heat shock genes (grpE-dnaK-dnaJ and groELS operons). Prevents heat-shock induction of these operons. In Arthrobacter sp. (strain FB24), this protein is Heat-inducible transcription repressor HrcA.